The chain runs to 233 residues: 2-C-methyl-D-erythritol 4-phosphate cytidylyltransferase (233 aa).

It belongs to the IspD/TarI cytidylyltransferase family. IspD subfamily.

The enzyme catalyses 2-C-methyl-D-erythritol 4-phosphate + CTP + H(+) = 4-CDP-2-C-methyl-D-erythritol + diphosphate. It participates in isoprenoid biosynthesis; isopentenyl diphosphate biosynthesis via DXP pathway; isopentenyl diphosphate from 1-deoxy-D-xylulose 5-phosphate: step 2/6. Its function is as follows. Catalyzes the formation of 4-diphosphocytidyl-2-C-methyl-D-erythritol from CTP and 2-C-methyl-D-erythritol 4-phosphate (MEP). In Nitrosomonas eutropha (strain DSM 101675 / C91 / Nm57), this protein is 2-C-methyl-D-erythritol 4-phosphate cytidylyltransferase.